A 1846-amino-acid polypeptide reads, in one-letter code: Unconventional myosin-Vb (1846 aa).

One can recognise a Myosin N-terminal SH3-like domain in the interval 8–60 (SRYTRVWIPDPDEVWRSAELTKDYKDGDESLQLRLEDDTILDYPIDVQNNQVP). A requires for interaction with LIMA1 region spans residues 21-40 (VWRSAELTKDYKDGDESLQL). In terms of domain architecture, Myosin motor spans 69–763 (VGENDLTALS…QVAYLEKLRA (695 aa)). 163–170 (GESGAGKT) contributes to the ATP binding site. Residues 599–629 (VPATNTAKSRSSSKINVRSSRPLMKAPNKEH) form a disordered region. Residues 607-619 (SRSSSKINVRSSR) show a composition bias toward low complexity. Residues 641-663 (LNLLMETLNATTPHYVRCIKPND) are actin-binding. IQ domains follow at residues 767 to 788 (REAT…KYRR), 789 to 813 (LRAA…EHLR), 814 to 837 (RTRA…YCRV), 838 to 861 (RRAA…PPVL), 862 to 884 (TEHK…HFQR), and 885 to 914 (QRDA…EARS). 2 coiled-coil regions span residues 915–1272 (AEHL…ADQR) and 1334–1450 (LKQV…RHHE). The segment at 1088–1122 (RDEQQTPGHRKNPSNQSSLESDSNYPSISTSEIGD) is disordered. Positions 1100–1120 (PSNQSSLESDSNYPSISTSEI) are enriched in polar residues. Phosphoserine is present on Ser-1444. Positions 1524–1801 (SSTINGIKKV…IRTIQAQLQE (278 aa)) constitute a Dilute domain.

The protein belongs to the TRAFAC class myosin-kinesin ATPase superfamily. Myosin family. As to quaternary structure, component of the CART complex, at least composed of ACTN4, HGS/HRS, MYO5B and TRIM3. Interacts with RAB11FIP2. Interacts with RAB11A and RAB8A. Found in a complex with CFTR and RAB11A. Interacts with NPC1L1. Interacts with LIMA1.

Its subcellular location is the cytoplasm. Functionally, may be involved in vesicular trafficking via its association with the CART complex. The CART complex is necessary for efficient transferrin receptor recycling but not for EGFR degradation. Required in a complex with RAB11A and RAB11FIP2 for the transport of NPC1L1 to the plasma membrane. Together with RAB11A participates in CFTR trafficking to the plasma membrane and TF (transferrin) recycling in nonpolarized cells. Together with RAB11A and RAB8A participates in epithelial cell polarization. Together with RAB25 regulates transcytosis. Required for proper localization of bile salt export pump ABCB11 at the apical/canalicular plasma membrane of hepatocytes. The chain is Unconventional myosin-Vb (Myo5b) from Rattus norvegicus (Rat).